Consider the following 233-residue polypeptide: C-type lectin domain-containing protein 87 (233 aa).

The N-terminal stretch at 1–19 (MRFCLLVAFILPGLFLVHA) is a signal peptide. O-linked (Xyl...) (chondroitin sulfate) serine glycosylation occurs at Ser31. Asn81 is a glycosylation site (N-linked (GlcNAc...) asparagine). Residues 93-223 (FADSCYWIEK…CTYMLYSICE (131 aa)) enclose the C-type lectin domain. 2 disulfide bridges follow: Cys114/Cys222 and Cys193/Cys214. The N-linked (GlcNAc...) asparagine glycan is linked to Asn225.

This chain is C-type lectin domain-containing protein 87, found in Caenorhabditis elegans.